The chain runs to 190 residues: Inosine triphosphate pyrophosphatase (190 aa).

9–14 (TGNAKK) is an ITP binding site. Glu39 lines the Mg(2+) pocket. ITP-binding positions include Lys51, 67 to 68 (DT), Lys84, 144 to 147 (FGWD), Lys167, and 172 to 173 (HR).

Belongs to the HAM1 NTPase family. In terms of assembly, homodimer. Mg(2+) serves as cofactor. It depends on Mn(2+) as a cofactor.

It is found in the cytoplasm. It carries out the reaction ITP + H2O = IMP + diphosphate + H(+). The enzyme catalyses dITP + H2O = dIMP + diphosphate + H(+). It catalyses the reaction XTP + H2O = XMP + diphosphate + H(+). Its function is as follows. Pyrophosphatase that hydrolyzes non-canonical purine nucleotides such as inosine triphosphate (ITP), deoxyinosine triphosphate (dITP) or xanthosine 5'-triphosphate (XTP) to their respective monophosphate derivatives. The enzyme does not distinguish between the deoxy- and ribose forms. Probably excludes non-canonical purines from RNA and DNA precursor pools, thus preventing their incorporation into RNA and DNA and avoiding chromosomal lesions. The chain is Inosine triphosphate pyrophosphatase from Pediculus humanus subsp. corporis (Body louse).